A 370-amino-acid chain; its full sequence is Homospermidine synthase 2 (370 aa).

This sequence belongs to the deoxyhypusine synthase family. In terms of assembly, homotetramer. NAD(+) is required as a cofactor. Post-translationally, the N-terminus is blocked. Expressed in roots.

The catalysed reaction is putrescine + spermidine = sym-homospermidine + propane-1,3-diamine. Its pathway is alkaloid biosynthesis; pyrrolizidine alkaloid biosynthesis. In terms of biological role, catalyzes the transfer of an aminobutyl unit from spermidine onto putrescine. The resulting polyamine homospermidine is a precursor in the biosynthesis of pyrrolizidine alkaloids. In Senecio vernalis (Spring groundsel), this protein is Homospermidine synthase 2.